Here is a 425-residue protein sequence, read N- to C-terminus: MAGILNVSALEIMDSRGNPTVEVEVILDDGSMGRAAVPSGASTGVHEAHELRDGGDRYLGKGVAKAVDFVNTEIDDALAGLEADDQRLIDQTLLELDGTENKSRLGANALLGVSMAVAHAAADSAGLELFRYVGGPNGHVLPVPMMNILNGGAHADSGVDVQEFMIAPIGAETFAEALQVGAEVYHSLKDVIKAKGLSTGLGDEGGFAPSVESTKAALDLIVEAIEKAGYTLGEDVALALDVASSEFYEDGVYNFEGGKHSSAEMVEVYADLVEQYPIVSIEDPLDEDDWEGYVTLTEKLGDKIQIVGDDLFVTNPSRLQEGIDRGAANALLVKVNQIGTLSETFDAVELAHRNGYRTMMSHRSGETEDTTIADLAVALNCGQIKTGAPARSERVAKYNQLLRIERYLEGAAVYAGRSAFPRFKN.

Residue Q162 participates in (2R)-2-phosphoglycerate binding. The Proton donor role is filled by E204. Mg(2+) is bound by residues D241, E282, and D309. 4 residues coordinate (2R)-2-phosphoglycerate: K334, R363, S364, and K385. Residue K334 is the Proton acceptor of the active site.

This sequence belongs to the enolase family. The cofactor is Mg(2+).

The protein localises to the cytoplasm. It localises to the secreted. The protein resides in the cell surface. It catalyses the reaction (2R)-2-phosphoglycerate = phosphoenolpyruvate + H2O. It participates in carbohydrate degradation; glycolysis; pyruvate from D-glyceraldehyde 3-phosphate: step 4/5. Catalyzes the reversible conversion of 2-phosphoglycerate (2-PG) into phosphoenolpyruvate (PEP). It is essential for the degradation of carbohydrates via glycolysis. The polypeptide is Enolase (Corynebacterium urealyticum (strain ATCC 43042 / DSM 7109)).